The sequence spans 183 residues: ATP synthase subunit delta (183 aa).

Belongs to the ATPase delta chain family. In terms of assembly, F-type ATPases have 2 components, F(1) - the catalytic core - and F(0) - the membrane proton channel. F(1) has five subunits: alpha(3), beta(3), gamma(1), delta(1), epsilon(1). F(0) has three main subunits: a(1), b(2) and c(10-14). The alpha and beta chains form an alternating ring which encloses part of the gamma chain. F(1) is attached to F(0) by a central stalk formed by the gamma and epsilon chains, while a peripheral stalk is formed by the delta and b chains.

It is found in the cell membrane. In terms of biological role, f(1)F(0) ATP synthase produces ATP from ADP in the presence of a proton or sodium gradient. F-type ATPases consist of two structural domains, F(1) containing the extramembraneous catalytic core and F(0) containing the membrane proton channel, linked together by a central stalk and a peripheral stalk. During catalysis, ATP synthesis in the catalytic domain of F(1) is coupled via a rotary mechanism of the central stalk subunits to proton translocation. Its function is as follows. This protein is part of the stalk that links CF(0) to CF(1). It either transmits conformational changes from CF(0) to CF(1) or is implicated in proton conduction. The protein is ATP synthase subunit delta of Oenococcus oeni (strain ATCC BAA-331 / PSU-1).